A 230-amino-acid chain; its full sequence is Phosphoglycolate phosphatase (230 aa).

Catalysis depends on D9, which acts as the Nucleophile. Positions 9, 11, and 175 each coordinate Mg(2+).

The protein belongs to the HAD-like hydrolase superfamily. CbbY/CbbZ/Gph/YieH family. Requires Mg(2+) as cofactor.

It carries out the reaction 2-phosphoglycolate + H2O = glycolate + phosphate. It functions in the pathway organic acid metabolism; glycolate biosynthesis; glycolate from 2-phosphoglycolate: step 1/1. Its function is as follows. Specifically catalyzes the dephosphorylation of 2-phosphoglycolate. Is involved in the dissimilation of the intracellular 2-phosphoglycolate formed during the DNA repair of 3'-phosphoglycolate ends, a major class of DNA lesions induced by oxidative stress. This is Phosphoglycolate phosphatase from Psychrobacter arcticus (strain DSM 17307 / VKM B-2377 / 273-4).